The following is a 339-amino-acid chain: Ferredoxin--NADP reductase (339 aa).

Residues glutamate 35, glutamine 43, tyrosine 48, valine 88, phenylalanine 122, aspartate 287, and serine 327 each contribute to the FAD site.

This sequence belongs to the ferredoxin--NADP reductase type 2 family. Homodimer. The cofactor is FAD.

It carries out the reaction 2 reduced [2Fe-2S]-[ferredoxin] + NADP(+) + H(+) = 2 oxidized [2Fe-2S]-[ferredoxin] + NADPH. The sequence is that of Ferredoxin--NADP reductase from Leuconostoc citreum (strain KM20).